The primary structure comprises 84 residues: Cytochrome b559 subunit alpha (84 aa).

A helical transmembrane segment spans residues 22-36 (IIHSITIPALFVAGW). Position 24 (His-24) interacts with heme.

This sequence belongs to the PsbE/PsbF family. Heterodimer of an alpha subunit and a beta subunit. PSII is composed of 1 copy each of membrane proteins PsbA, PsbB, PsbC, PsbD, PsbE, PsbF, PsbH, PsbI, PsbJ, PsbK, PsbL, PsbM, PsbT, PsbX, PsbY, PsbZ, Psb30/Ycf12, at least 3 peripheral proteins of the oxygen-evolving complex and a large number of cofactors. It forms dimeric complexes. Heme b serves as cofactor.

Its subcellular location is the plastid. The protein localises to the chloroplast thylakoid membrane. Its function is as follows. This b-type cytochrome is tightly associated with the reaction center of photosystem II (PSII). PSII is a light-driven water:plastoquinone oxidoreductase that uses light energy to abstract electrons from H(2)O, generating O(2) and a proton gradient subsequently used for ATP formation. It consists of a core antenna complex that captures photons, and an electron transfer chain that converts photonic excitation into a charge separation. This chain is Cytochrome b559 subunit alpha, found in Guillardia theta (Cryptophyte).